The primary structure comprises 788 residues: Cadherin-related family member 4 (788 aa).

The N-terminal stretch at 1–16 (MVLLRLLVFLFAPVVS) is a signal peptide. At 17 to 686 (DLCSLPCFIN…DTEAFWQPQP (670 aa)) the chain is on the extracellular side. Cadherin domains are found at residues 237–338 (LEQA…PPRC), 339–449 (LPAL…APRT), 444–554 (ACAP…EPPF), and 551–674 (EPPF…TPML). Asn-242 carries N-linked (GlcNAc...) asparagine glycosylation. Residues 687-707 (WFVVVLTATGALLLLALGWLL) traverse the membrane as a helical segment. The Cytoplasmic portion of the chain corresponds to 708-788 (GRLLQGLAQL…NTHTGARRWL (81 aa)).

The protein localises to the membrane. In terms of biological role, cadherins are calcium-dependent cell adhesion proteins. They preferentially interact with themselves in a homophilic manner in connecting cells; cadherins may thus contribute to the sorting of heterogeneous cell types. The protein is Cadherin-related family member 4 (CDHR4) of Homo sapiens (Human).